The following is a 617-amino-acid chain: UvrABC system protein C (617 aa).

The GIY-YIG domain maps to 22 to 100; that stretch reads KLPGVYRFFD…IKALSPKYNI (79 aa). A UVR domain is found at 209-244; it reads DELTRTLQHKMQTAAANLQFEEAARYRDQIQALGII.

The protein belongs to the UvrC family. Interacts with UvrB in an incision complex.

Its subcellular location is the cytoplasm. Its function is as follows. The UvrABC repair system catalyzes the recognition and processing of DNA lesions. UvrC both incises the 5' and 3' sides of the lesion. The N-terminal half is responsible for the 3' incision and the C-terminal half is responsible for the 5' incision. The sequence is that of UvrABC system protein C from Neisseria gonorrhoeae (strain ATCC 700825 / FA 1090).